A 141-amino-acid chain; its full sequence is MARKEFQLEIVTPERIVYSDKVVSITAQAEDGRLGILHDHRPLVTKLQIAPFSFITQEGQEENVAISGSGYLEVTPQKVTVLCQTAELSHEIELERAQEAKERAEERLQASDEAIDYSRAEASLKRAIARIDAARAQRNDD.

This sequence belongs to the ATPase epsilon chain family. F-type ATPases have 2 components, CF(1) - the catalytic core - and CF(0) - the membrane proton channel. CF(1) has five subunits: alpha(3), beta(3), gamma(1), delta(1), epsilon(1). CF(0) has three main subunits: a, b and c.

The protein resides in the cell membrane. Its function is as follows. Produces ATP from ADP in the presence of a proton gradient across the membrane. This chain is ATP synthase epsilon chain, found in Natranaerobius thermophilus (strain ATCC BAA-1301 / DSM 18059 / JW/NM-WN-LF).